A 1347-amino-acid polypeptide reads, in one-letter code: Protocadherin-11 X-linked (1347 aa).

The first 23 residues, 1–23 (MDLLSGTYIFAVLLACVVFHSGA), serve as a signal peptide directing secretion. The Extracellular segment spans residues 24-812 (QEKNYTIREE…VSSPTSDYVK (789 aa)). 7 consecutive Cadherin domains span residues 26–139 (KNYT…APLF), 140–249 (PATV…HPVF), 250–355 (KETE…VPSI), 362–466 (NPVN…APVF), 467–570 (TQSF…SPVF), 571–673 (THNE…KPVF), and 677–795 (PSNC…APVT). N-linked (GlcNAc...) asparagine glycosylation is found at Asn27, Asn48, and Asn54. Residue Asn344 is glycosylated (N-linked (GlcNAc...) asparagine). The N-linked (GlcNAc...) asparagine glycan is linked to Asn553. Residue Asn773 is glycosylated (N-linked (GlcNAc...) asparagine). Residues 813 to 833 (ILVAAVAGTITVVVVIFITAV) traverse the membrane as a helical segment. The Cytoplasmic segment spans residues 834–1347 (VRCRQAPHLK…DSPIMEEHPL (514 aa)). Disordered stretches follow at residues 1057-1091 (LPEG…GYPQ), 1097-1116 (RATP…ESTF), and 1326-1347 (FTPR…EHPL).

Expressed strongly in fetal brain and brain (cortex, amygdala, thalamus, substantia nigra, hippocampus, caudate nucleus and corpus callosum). Expressed at low level in testis.

The protein resides in the cell membrane. Functionally, potential calcium-dependent cell-adhesion protein. The sequence is that of Protocadherin-11 X-linked (PCDH11X) from Homo sapiens (Human).